The primary structure comprises 168 residues: uncharacterized protein (168 aa).

An N-terminal signal peptide occupies residues 1–21; sequence MVYEVLAVVSGGLLGFGVTWA.

This is an uncharacterized protein from Archaeoglobus fulgidus (strain ATCC 49558 / DSM 4304 / JCM 9628 / NBRC 100126 / VC-16).